The following is a 243-amino-acid chain: Ubiquinone/menaquinone biosynthesis C-methyltransferase UbiE (243 aa).

Residues Thr69, Asp90, and 116–117 each bind S-adenosyl-L-methionine; that span reads DA.

The protein belongs to the class I-like SAM-binding methyltransferase superfamily. MenG/UbiE family.

The enzyme catalyses a 2-demethylmenaquinol + S-adenosyl-L-methionine = a menaquinol + S-adenosyl-L-homocysteine + H(+). The catalysed reaction is a 2-methoxy-6-(all-trans-polyprenyl)benzene-1,4-diol + S-adenosyl-L-methionine = a 5-methoxy-2-methyl-3-(all-trans-polyprenyl)benzene-1,4-diol + S-adenosyl-L-homocysteine + H(+). The protein operates within quinol/quinone metabolism; menaquinone biosynthesis; menaquinol from 1,4-dihydroxy-2-naphthoate: step 2/2. Its pathway is cofactor biosynthesis; ubiquinone biosynthesis. Its function is as follows. Methyltransferase required for the conversion of demethylmenaquinol (DMKH2) to menaquinol (MKH2) and the conversion of 2-polyprenyl-6-methoxy-1,4-benzoquinol (DDMQH2) to 2-polyprenyl-3-methyl-6-methoxy-1,4-benzoquinol (DMQH2). The polypeptide is Ubiquinone/menaquinone biosynthesis C-methyltransferase UbiE (Cupriavidus necator (strain ATCC 17699 / DSM 428 / KCTC 22496 / NCIMB 10442 / H16 / Stanier 337) (Ralstonia eutropha)).